Reading from the N-terminus, the 364-residue chain is Deoxyribonuclease-2-alpha (364 aa).

The N-terminal stretch at 1-21 (MATLSPLLLAALLWVPVGTLT) is a signal peptide. Cysteines 22 and 161 form a disulfide. Asn72, Asn88, Asn171, Asn214, Asn268, and Asn292 each carry an N-linked (GlcNAc...) asparagine glycan. Disulfide bonds link Cys269-Cys349 and Cys310-Cys329. His297 is a catalytic residue.

It belongs to the DNase II family.

The protein localises to the lysosome. The enzyme catalyses Endonucleolytic cleavage to nucleoside 3'-phosphates and 3'-phosphooligonucleotide end-products.. Its function is as follows. Hydrolyzes DNA under acidic conditions with a preference for double-stranded DNA. Plays a major role in the clearance of nucleic acids generated through apoptosis, hence preventing autoinflammation. Necessary for proper fetal development and for definitive erythropoiesis in fetal liver and bone marrow, where it degrades nuclear DNA expelled from erythroid precursor cells. The sequence is that of Deoxyribonuclease-2-alpha (DNASE2) from Sus scrofa (Pig).